Consider the following 564-residue polypeptide: Protein glycosylation K (564 aa).

Residues 1-15 (MLKKLFFILSKEDKN) lie on the Cytoplasmic side of the membrane. A helical transmembrane segment spans residues 16 to 38 (FLFFLLVFSVFISFIETFAISLV). Residues 17–319 (LFFLLVFSVF…IITSYHDLLY (303 aa)) enclose the ABC transmembrane type-1 domain. The Extracellular portion of the chain corresponds to 39–76 (MPFITLASDFSYFDRNKYLISLKEYLNIPVFEIIVYFG). The important for stimulation of ATPase activity by lipid-linked oligosaccharides and subsequent translocation of lipid-linked oligosaccharides stretch occupies residues 46–67 (SDFSYFDRNKYLISLKEYLNIP). Residues 77-98 (VGLIVFYVFRALLNAYYFHLLA) traverse the membrane as a helical segment. The Cytoplasmic portion of the chain corresponds to 99–149 (RFSKGRYHAIAYKVFSKFLNINYEKFTQKNQSEILKSITGEVYNLSTMISS). A helical transmembrane segment spans residues 150-170 (FLLLMSEIFVVLLLYALMLLI). The Extracellular segment spans residues 171–173 (NYK). The helical transmembrane segment at 174–197 (ITLFLSIFMVLNAFILVKILSPII) threads the bilayer. Over 198-254 (KKAGVRREEAMKNFFEILNTNLNNFKFIKLKTKEDGVLSLFKAQSEAFSKANITNES) the chain is Cytoplasmic. The helical transmembrane segment at 255–276 (VAAVPRIYLEGIGFCVLVFIVV) threads the bilayer. Over 277–292 (FLVLKNESDISGILST) the chain is Extracellular. A helical transmembrane segment spans residues 293–314 (ISIFVLALYRLMPSANRIITSY). Topologically, residues 315–564 (HDLLYYHSSL…LEHGKLKEEK (250 aa)) are cytoplasmic. In terms of domain architecture, ABC transporter spans 349 to 564 (LKICNLSFGY…LEHGKLKEEK (216 aa)). 382-389 (GESGCGKS) is a binding site for ATP.

The protein belongs to the ABC transporter superfamily. Homodimer; domain-swapped. Helices that arise in transmembrane regions 4 and 5 from one subunit cross over and contact the nucleotide-binding domain from the other subunit.

The protein resides in the cell inner membrane. It carries out the reaction ATP + H2O + lipopolysaccharideSide 1 = ADP + phosphate + lipopolysaccharideSide 2.. The protein operates within protein modification; protein glycosylation. In terms of biological role, mediates the ATP-dependent translocation of the undecaprenylpyrophosphate-linked heptasaccharide intermediate across the cell membrane; this is an essential step during the N-linked protein glycosylation pathway. Transport across the membrane is effected via ATP-driven conformation changes. Most likely, only the polar and charged part of the glycolipid enter the substrate-binding cavity, and the lipid tail remains exposed to the membrane lipids during the transmembrane flipping process. The sequence is that of Protein glycosylation K (pglK) from Campylobacter jejuni subsp. jejuni serotype O:2 (strain ATCC 700819 / NCTC 11168).